We begin with the raw amino-acid sequence, 444 residues long: ATP-dependent RNA helicase DBP8 (444 aa).

Residues 3–31 (QSFKELGVAKWLSESLEAMKIHSPTSIQS) carry the Q motif motif. Residues 34-210 (IPEILKGRDC…DKPRAEGKLP (177 aa)) enclose the Helicase ATP-binding domain. 47-54 (AKTGSGKT) lines the ATP pocket. Residues 156–159 (DEAD) carry the DEAD box motif. Residues 244–390 (YLTSILKLPK…LLEGVDDDKV (147 aa)) form the Helicase C-terminal domain. Positions 402 to 418 (KREAMLDMDKESFGERR) are enriched in basic and acidic residues. Residues 402-444 (KREAMLDMDKESFGERRKVNKKKRAVEEPSGKRQQKKVKKVKS) form a disordered region. Over residues 434 to 444 (RQQKKVKKVKS) the composition is skewed to basic residues.

The protein belongs to the DEAD box helicase family. DDX49/DBP8 subfamily.

The protein resides in the nucleus. Its subcellular location is the nucleolus. The catalysed reaction is ATP + H2O = ADP + phosphate + H(+). In terms of biological role, ATP-binding RNA helicase involved in 40S ribosomal subunit biogenesis and is required for the normal formation of 18S rRNAs through pre-rRNA processing at A0, A1 and A2 sites. Required for vegetative growth. This chain is ATP-dependent RNA helicase DBP8 (DBP8), found in Lodderomyces elongisporus (strain ATCC 11503 / CBS 2605 / JCM 1781 / NBRC 1676 / NRRL YB-4239) (Yeast).